The following is a 938-amino-acid chain: Collagen alpha-1(I) chain (938 aa).

The segment at Gly1–Pro938 is disordered. Residues Pro18, Pro21, Pro24, Pro33, Pro36, Pro39, Pro54, Pro69, Pro75, Pro84, and Pro90 each carry the 4-hydroxyproline modification. Residues Pro26 to Met45 are compositionally biased toward low complexity. The span at Asn57–Glu71 shows a compositional bias: basic and acidic residues. The residue at position 93 (Lys93) is a 5-hydroxylysine; alternate. Lys93 carries an O-linked (Gal...) hydroxylysine; alternate glycan. Ser99 carries the phosphoserine modification. Positions Asp107–Ala135 are enriched in low complexity. 4-hydroxyproline is present on residues Pro117, Pro138, Pro147, Pro150, Pro177, Pro180, Pro192, Pro198, Pro207, Pro213, Pro216, and Pro231. The span at Pro137–Phe149 shows a compositional bias: pro residues. A compositionally biased stretch (low complexity) spans Ala183–Ser222. Residue Lys234 is modified to 5-hydroxylysine. Pro240, Pro243, Pro255, Pro264, Pro279, Pro285, Pro294, and Pro300 each carry 4-hydroxyproline. The segment covering Gly289–Gly298 has biased composition (gly residues). Position 309 is a 5-hydroxylysine (Lys309). 4-hydroxyproline is present on residues Pro314, Pro323, Pro329, Pro335, Pro344, Pro347, Pro356, Pro365, Pro371, Pro383, Pro392, Pro401, Pro404, Pro422, Pro439, Pro445, Pro451, Pro458, Pro464, Pro476, Pro485, Pro497, Pro503, Pro509, and Pro518. Low complexity predominate over residues Lys338–Arg364. Residues Ala373–Pro392 are compositionally biased toward low complexity. Lys530 bears the 5-hydroxylysine mark. Pro536, Pro551, and Pro557 each carry 4-hydroxyproline. Residues Ser563–Ala577 show a composition bias toward low complexity. Ser566 bears the Phosphoserine mark. 4-hydroxyproline occurs at positions 578, 584, 587, 596, 602, 620, 629, and 638. The span at Ala590–Ala617 shows a compositional bias: low complexity. Residues Pro619–Pro631 are compositionally biased toward pro residues. Lys641 is modified (5-hydroxylysine). The span at Ser646–Val662 shows a compositional bias: low complexity. Pro650 and Pro656 each carry 4-hydroxyproline. Pro664 carries the 3-hydroxyproline modification. Residues Pro665, Pro674, Pro677, Pro693, Pro703, Pro712, Pro730, Pro739, Pro742, Pro748, Pro763, Pro769, Pro775, Pro784, and Pro790 each carry the 4-hydroxyproline modification. Residues Pro762 to Ala772 are compositionally biased toward pro residues. Position 799 is a 5-hydroxylysine (Lys799). The span at Pro807 to Val822 shows a compositional bias: pro residues. A 4-hydroxyproline mark is found at Pro810, Pro813, and Pro816. Residues Ala843–Pro867 are compositionally biased toward low complexity. 4-hydroxyproline is present on residues Pro871, Pro874, Pro892, and Pro907. Over residues Pro874 to Pro907 the composition is skewed to low complexity. Residue Pro912 is modified to 3-hydroxyproline. At Pro913 the chain carries 4-hydroxyproline. Pro residues predominate over residues Val923–Pro938. Residue Pro925 is modified to 3-hydroxyproline. At Pro926 the chain carries 4-hydroxyproline. The residue at position 928 (Pro928) is a 3-hydroxyproline. At Pro929 the chain carries 4-hydroxyproline. Pro931 carries the 3-hydroxyproline modification. A 4-hydroxyproline mark is found at Pro932, Pro935, and Pro938.

Belongs to the fibrillar collagen family. In terms of assembly, trimers of one alpha 2(I) and two alpha 1(I) chains. Contains mostly 4-hydroxyproline. Proline residues at the third position of the tripeptide repeating unit (G-X-Y) are hydroxylated in some or all of the chains. In terms of processing, contains 3-hydroxyproline at a few sites. This modification occurs on the first proline residue in the sequence motif Gly-Pro-Hyp, where Hyp is 4-hydroxyproline. Post-translationally, lysine residues at the third position of the tripeptide repeating unit (G-X-Y) are 5-hydroxylated in some or all of the chains. O-glycosylated on hydroxylated lysine residues. The O-linked glycan consists of a Glc-Gal disaccharide. Expressed in bones.

It is found in the secreted. Its subcellular location is the extracellular space. The protein localises to the extracellular matrix. Its function is as follows. Type I collagen is a member of group I collagen (fibrillar forming collagen). The chain is Collagen alpha-1(I) chain from Megalonyx jeffersonii (Jefferson's ground sloth).